A 306-amino-acid polypeptide reads, in one-letter code: Pantothenate kinase (306 aa).

An ATP-binding site is contributed by 90–97; sequence GSVAVGKS.

Belongs to the prokaryotic pantothenate kinase family.

It localises to the cytoplasm. The catalysed reaction is (R)-pantothenate + ATP = (R)-4'-phosphopantothenate + ADP + H(+). It participates in cofactor biosynthesis; coenzyme A biosynthesis; CoA from (R)-pantothenate: step 1/5. In Lactococcus lactis subsp. lactis (strain IL1403) (Streptococcus lactis), this protein is Pantothenate kinase (coaA).